Here is a 295-residue protein sequence, read N- to C-terminus: 33 kDa chaperonin (295 aa).

Intrachain disulfides connect Cys-237–Cys-239 and Cys-270–Cys-273.

It belongs to the HSP33 family. Post-translationally, under oxidizing conditions two disulfide bonds are formed involving the reactive cysteines. Under reducing conditions zinc is bound to the reactive cysteines and the protein is inactive.

Its subcellular location is the cytoplasm. Functionally, redox regulated molecular chaperone. Protects both thermally unfolding and oxidatively damaged proteins from irreversible aggregation. Plays an important role in the bacterial defense system toward oxidative stress. The chain is 33 kDa chaperonin from Geobacillus sp. (strain WCH70).